Consider the following 100-residue polypeptide: Ubiquitin-related modifier 1 (100 aa).

Glycine 100 is modified (1-thioglycine). Glycine 100 participates in a covalent cross-link: Glycyl lysine isopeptide (Gly-Lys) (interchain with K-? in acceptor proteins).

It belongs to the URM1 family. In terms of processing, C-terminal thiocarboxylation occurs in 2 steps, it is first acyl-adenylated (-COAMP) via the hesA/moeB/thiF part of UBA4, then thiocarboxylated (-COSH) via the rhodanese domain of UBA4.

The protein localises to the cytoplasm. Its pathway is tRNA modification; 5-methoxycarbonylmethyl-2-thiouridine-tRNA biosynthesis. In terms of biological role, acts as a sulfur carrier required for 2-thiolation of mcm(5)S(2)U at tRNA wobble positions of cytosolic tRNA(Lys), tRNA(Glu) and tRNA(Gln). Serves as sulfur donor in tRNA 2-thiolation reaction by being thiocarboxylated (-COSH) at its C-terminus by the MOCS3 homolog UBA4. The sulfur is then transferred to tRNA to form 2-thiolation of mcm(5)S(2)U. Prior mcm(5) tRNA modification by the elongator complex is required for 2-thiolation. Also acts as a ubiquitin-like protein (UBL) that is covalently conjugated via an isopeptide bond to lysine residues of target proteins such as AHP1. The thiocarboxylated form serves as substrate for conjugation and oxidative stress specifically induces the formation of UBL-protein conjugates. The polypeptide is Ubiquitin-related modifier 1 (Eremothecium gossypii (strain ATCC 10895 / CBS 109.51 / FGSC 9923 / NRRL Y-1056) (Yeast)).